The sequence spans 234 residues: MKKIIVAIDGYSACGKSTTAKILAAKLGYVYIDTGAMYRSVALYFIQHYINSTNPKAVAEALNQIHISFVHNNKTETCETYLNGLNVESEIRKMYVSEKVSEVSAIPEVRKRMVELQQKMARKRGVVMDGRDIGTHVFPDAELKIFMVADMHVRAFRRQQELFERKQIIDLDDIIKNIESRDLMDTTREESPLRKASDAYEIDTTYITVEEQVDCIMNIAVGKMIELEYNIENI.

ATP is bound at residue 10-18 (GYSACGKST).

The protein belongs to the cytidylate kinase family. Type 1 subfamily.

It localises to the cytoplasm. It carries out the reaction CMP + ATP = CDP + ADP. The catalysed reaction is dCMP + ATP = dCDP + ADP. This Cytophaga hutchinsonii (strain ATCC 33406 / DSM 1761 / CIP 103989 / NBRC 15051 / NCIMB 9469 / D465) protein is Cytidylate kinase.